The sequence spans 225 residues: Cytidylate kinase (225 aa).

ATP is bound at residue 11–19 (GPAAAGKST).

Belongs to the cytidylate kinase family. Type 1 subfamily.

It localises to the cytoplasm. The catalysed reaction is CMP + ATP = CDP + ADP. The enzyme catalyses dCMP + ATP = dCDP + ADP. This Bacillus cytotoxicus (strain DSM 22905 / CIP 110041 / 391-98 / NVH 391-98) protein is Cytidylate kinase.